Here is a 691-residue protein sequence, read N- to C-terminus: TBC1 domain family member 15 (691 aa).

Alanine 2 is subject to N-acetylalanine. Phosphoserine is present on residues serine 23, serine 70, serine 205, proline 213, and serine 274. The Rab-GAP TBC domain occupies 346 to 556; sequence GLSHALRKQA…RLWEVMWTEL (211 aa). Serine 640 and serine 675 each carry phosphoserine. At threonine 689 the chain carries Phosphothreonine.

In terms of assembly, interacts with non-phosphorylated form of RAB8A; phosphorylation of RAB8A at 'Thr-72' disrupts this interaction. Interacts with ARMC12. In terms of tissue distribution, ubiquitous.

The protein localises to the cytoplasm. Acts as a GTPase activating protein for RAB7A. Does not act on RAB4, RAB5 or RAB6. This chain is TBC1 domain family member 15 (TBC1D15), found in Homo sapiens (Human).